Here is a 288-residue protein sequence, read N- to C-terminus: 4-diphosphocytidyl-2-C-methyl-D-erythritol kinase (288 aa).

Residue Lys13 is part of the active site. 96–106 (PMGGGIGGGSS) contacts ATP. Asp138 is an active-site residue.

It belongs to the GHMP kinase family. IspE subfamily.

The enzyme catalyses 4-CDP-2-C-methyl-D-erythritol + ATP = 4-CDP-2-C-methyl-D-erythritol 2-phosphate + ADP + H(+). Its pathway is isoprenoid biosynthesis; isopentenyl diphosphate biosynthesis via DXP pathway; isopentenyl diphosphate from 1-deoxy-D-xylulose 5-phosphate: step 3/6. In terms of biological role, catalyzes the phosphorylation of the position 2 hydroxy group of 4-diphosphocytidyl-2C-methyl-D-erythritol. This Aliivibrio fischeri (strain MJ11) (Vibrio fischeri) protein is 4-diphosphocytidyl-2-C-methyl-D-erythritol kinase.